Reading from the N-terminus, the 565-residue chain is Phosphomethylpyrimidine synthase (565 aa).

Residues N201, M230, Y259, H295, 315–317, 356–359, and E395 each bind substrate; these read SRG and DGLR. Position 399 (H399) interacts with Zn(2+). Y422 provides a ligand contact to substrate. Position 463 (H463) interacts with Zn(2+). Residues C543, C546, and C551 each coordinate [4Fe-4S] cluster.

Belongs to the ThiC family. Homodimer. The cofactor is [4Fe-4S] cluster.

It catalyses the reaction 5-amino-1-(5-phospho-beta-D-ribosyl)imidazole + S-adenosyl-L-methionine = 4-amino-2-methyl-5-(phosphooxymethyl)pyrimidine + CO + 5'-deoxyadenosine + formate + L-methionine + 3 H(+). It functions in the pathway cofactor biosynthesis; thiamine diphosphate biosynthesis. Functionally, catalyzes the synthesis of the hydroxymethylpyrimidine phosphate (HMP-P) moiety of thiamine from aminoimidazole ribotide (AIR) in a radical S-adenosyl-L-methionine (SAM)-dependent reaction. This Ehrlichia canis (strain Jake) protein is Phosphomethylpyrimidine synthase.